The chain runs to 596 residues: Heat shock factor protein 5 (596 aa).

The DNA-binding element occupies 10-200 (NPNNFPAKLW…FHRSFRRDSL (191 aa)). A disordered region spans residues 541–576 (EMGPASKPSEDTGLATPARYREHRSNSQQGKSPDLH). Residue S572 is modified to Phosphoserine.

Belongs to the HSF family. In terms of assembly, homooligomer.

It localises to the nucleus. Its subcellular location is the chromosome. DNA-binding transcription factor that is essential for male fertility, spermatogenesis and meiotic prophase progression in spermatocytes under non-stress conditions. Positvely and negatively regulates gene expression to ensure progression of meiotic prophase beyond pachytene stage in spermatocytes. Plays a role in male germline meiotic sex chromosome remodeling and silencing through regulation of SMARCA4. The chain is Heat shock factor protein 5 (HSF5) from Homo sapiens (Human).